The following is a 505-amino-acid chain: ATP synthase subunit alpha (505 aa).

169-176 provides a ligand contact to ATP; sequence GDRKTGKT.

This sequence belongs to the ATPase alpha/beta chains family. F-type ATPases have 2 components, CF(1) - the catalytic core - and CF(0) - the membrane proton channel. CF(1) has five subunits: alpha(3), beta(3), gamma(1), delta(1), epsilon(1). CF(0) has three main subunits: a(1), b(2) and c(9-12). The alpha and beta chains form an alternating ring which encloses part of the gamma chain. CF(1) is attached to CF(0) by a central stalk formed by the gamma and epsilon chains, while a peripheral stalk is formed by the delta and b chains.

It localises to the cell membrane. It carries out the reaction ATP + H2O + 4 H(+)(in) = ADP + phosphate + 5 H(+)(out). In terms of biological role, produces ATP from ADP in the presence of a proton gradient across the membrane. The alpha chain is a regulatory subunit. This is ATP synthase subunit alpha from Pediococcus pentosaceus (strain ATCC 25745 / CCUG 21536 / LMG 10740 / 183-1w).